We begin with the raw amino-acid sequence, 356 residues long: Chavicol O-methyltransferase (356 aa).

The S-adenosyl-L-methionine site is built by G202, D225, D245, M246, and K259. H263 (proton acceptor) is an active-site residue.

This sequence belongs to the class I-like SAM-binding methyltransferase superfamily. Cation-independent O-methyltransferase family. COMT subfamily. In terms of assembly, homodimer. In terms of tissue distribution, specifically expressed in the peltate glandular trichomes on the surface of the young basil leaves.

It carries out the reaction (E)-isoeugenol + S-adenosyl-L-methionine = (E)-isomethyleugenol + S-adenosyl-L-homocysteine + H(+). It participates in aromatic compound metabolism; phenylpropanoid biosynthesis. In terms of biological role, phenylpropene O-methyltransferase that catalyzes the methylation of the para-4-hydroxyl of chavicol to methylchavicol. Can also convert eugenol to methyleugenol but with less affinity. This chain is Chavicol O-methyltransferase (CVOMT1), found in Ocimum basilicum (Sweet basil).